A 185-amino-acid chain; its full sequence is Transcription termination/antitermination protein NusG (185 aa).

One can recognise a KOW domain in the interval 134–162 (PGQMVRVIDGPFNDFDGLVEEVNYEKNRL).

The protein belongs to the NusG family.

Functionally, participates in transcription elongation, termination and antitermination. This Xylella fastidiosa (strain 9a5c) protein is Transcription termination/antitermination protein NusG.